Reading from the N-terminus, the 319-residue chain is Transaldolase (319 aa).

The active-site Schiff-base intermediate with substrate is the lysine 131.

This sequence belongs to the transaldolase family. Type 1 subfamily. As to quaternary structure, homodimer.

The protein resides in the cytoplasm. It carries out the reaction D-sedoheptulose 7-phosphate + D-glyceraldehyde 3-phosphate = D-erythrose 4-phosphate + beta-D-fructose 6-phosphate. The protein operates within carbohydrate degradation; pentose phosphate pathway; D-glyceraldehyde 3-phosphate and beta-D-fructose 6-phosphate from D-ribose 5-phosphate and D-xylulose 5-phosphate (non-oxidative stage): step 2/3. Transaldolase is important for the balance of metabolites in the pentose-phosphate pathway. This chain is Transaldolase, found in Wigglesworthia glossinidia brevipalpis.